Consider the following 294-residue polypeptide: Non-selective voltage-gated ion channel VDAC2 (294 aa).

An N-acetylalanine modification is found at alanine 2. ATP is bound by residues lysine 23 and lysine 31. At lysine 31 the chain carries N6-acetyllysine; alternate. An N6-succinyllysine; alternate modification is found at lysine 31. A Glycyl lysine isopeptide (Lys-Gly) (interchain with G-Cter in ubiquitin); alternate cross-link involves residue lysine 31. 2 beta stranded membrane passes run 37 to 46 (LVKLDVKTKS) and 50 to 58 (VEFSTSGSS). Glycyl lysine isopeptide (Lys-Gly) (interchain with G-Cter in ubiquitin) cross-links involve residues lysine 64 and lysine 72. The chain crosses the membrane as a beta stranded span at residues 65–75 (VTGTLETKYKW). The residue at position 78 (tyrosine 78) is a Phosphotyrosine. 3 consecutive transmembrane segments (beta stranded) span residues 80 to 87 (LTFTEKWN), 91 to 100 (TLGTEIAIED), and 106 to 115 (LKLTFDTTFS). Phosphothreonine is present on threonine 118. Position 120 is an N6-acetyllysine; alternate (lysine 120). A Glycyl lysine isopeptide (Lys-Gly) (interchain with G-Cter in ubiquitin); alternate cross-link involves residue lysine 120. Residues lysine 121 and lysine 124 each participate in a glycyl lysine isopeptide (Lys-Gly) (interchain with G-Cter in ubiquitin) cross-link. 4 beta stranded membrane passes run 122–131 (SGKIKSSYKR), 134–141 (INLGCDVD), 148–156 (AIHGSAVFG), and 161–169 (LAGYQMTFD). Lysine 172 participates in a covalent cross-link: Glycyl lysine isopeptide (Lys-Gly) (interchain with G-Cter in ubiquitin). A run of 6 beta stranded transmembrane segments spans residues 174–186 (KLTR…GYRT), 189–196 (FQLHTNVN), 200–209 (EFGGSIYQKV), 213–222 (LDTSVNLAWT), 229–238 (RFGIAAKYQL), and 242–249 (ASISAKVN). Serine 251 bears the Phosphoserine mark. NAD(+) contacts are provided by residues 253–255 (LIG) and 271–275 (SALVD). Beta stranded transmembrane passes span 253 to 262 (LIGVGYTQTL) and 265 to 274 (GVKLTLSALV). At lysine 277 the chain carries N6-acetyllysine; alternate. Lysine 277 participates in a covalent cross-link: Glycyl lysine isopeptide (Lys-Gly) (interchain with G-Cter in ubiquitin); alternate. The beta stranded transmembrane segment at 284 to 293 (HKVGLALELE) threads the bilayer. Residue lysine 285 forms a Glycyl lysine isopeptide (Lys-Gly) (interchain with G-Cter in ubiquitin) linkage.

Belongs to the eukaryotic mitochondrial porin family. Monomer, homodimer and higher order oligomers; formation of higher order structures is necessary for scramblase activity. Interacts with ARMC12 in a TBC1D21-dependent manner. Interacts with KLC3. Interacts with SPATA33. Interacts with PPP3CC in a SPATA33-dependent manner. Ubiquitinated by PRKN during mitophagy, leading to its degradation and enhancement of mitophagy. Deubiquitinated by USP30. In terms of tissue distribution, expressed in erythrocytes (at protein level). Expressed in all tissues examined.

It localises to the mitochondrion outer membrane. The protein resides in the membrane. It catalyses the reaction chloride(in) = chloride(out). It carries out the reaction K(+)(in) = K(+)(out). The enzyme catalyses a 1,2-diacyl-sn-glycero-3-phospho-L-serine(in) = a 1,2-diacyl-sn-glycero-3-phospho-L-serine(out). The catalysed reaction is a 1,2-diacyl-sn-glycero-3-phosphocholine(in) = a 1,2-diacyl-sn-glycero-3-phosphocholine(out). It catalyses the reaction a 1,2-diacyl-sn-glycero-3-phospho-(1D-myo-inositol)(in) = a 1,2-diacyl-sn-glycero-3-phospho-(1D-myo-inositol)(out). Its function is as follows. Non-selective voltage-gated ion channel that mediates the transport of anions and cations through the mitochondrion outer membrane and plasma membrane. The channel adopts an open conformation at zero mV and a closed conformation at both positive and negative potentials. There are two populations of channels; the main that functions in a lower open-state conductance with lower ion selectivity, that switch, in a voltage-dependent manner, from the open to a low-conducting 'closed' state and the other that has a normal ion selectivity in the typical high conductance, 'open' state. Binds various lipids, including the sphingolipid ceramide, the phospholipid phosphatidylcholine, and the sterols cholesterol and oxysterol. Binding of ceramide promotes the mitochondrial outer membrane permeabilization (MOMP) apoptotic pathway. Functionally, catalyzes the scrambling of phospholipids across the outer mitochondrial membrane; the mechanism is unrelated to channel activity and is capable of translocating both anionic and zwitterionic phospholipids. In Homo sapiens (Human), this protein is Non-selective voltage-gated ion channel VDAC2.